The following is a 739-amino-acid chain: Poly(A) polymerase gamma (739 aa).

Lys2 carries the N6-acetyllysine modification. Residue Ser23 is modified to Phosphoserine. ATP-binding positions include 99-101, Thr108, 112-114, Asp166, Lys227, Tyr236, and 245-246; these read FGS, DID, and GV. Mg(2+)-binding residues include Asp112, Asp114, and Asp166. The disordered stretch occupies residues 506–566; that stretch reads KSLSDVSRSS…PTGEIERSSA (61 aa). 2 stretches are compositionally biased toward polar residues: residues 509–531 and 538–556; these read SDVSRSSGGLQSKRSSLDSTCLD and SGTPFNSPVSANKPSNPDS. Ser524 carries the phosphoserine modification. Phosphoserine occurs at positions 602 and 651. Position 657 is a phosphothreonine (Thr657). The span at 677 to 688 shows a compositional bias: basic and acidic residues; the sequence is SRAAEDRKRKPM. The interval 677–725 is disordered; it reads SRAAEDRKRKPMDSIGGESMPIPTIDTARKKRLPSKELPDSSSPVPANN. Position 711 is a phosphoserine (Ser711).

It belongs to the poly(A) polymerase family. The cofactor is Mg(2+). Mn(2+) serves as cofactor.

The protein localises to the nucleus. The catalysed reaction is RNA(n) + ATP = RNA(n)-3'-adenine ribonucleotide + diphosphate. Functionally, responsible for the post-transcriptional adenylation of the 3'-terminal of mRNA precursors and several small RNAs including signal recognition particle (SRP) RNA, nuclear 7SK RNA, U2 small nuclear RNA, and ribosomal 5S RNA. The protein is Poly(A) polymerase gamma (Papolg) of Mus musculus (Mouse).